The following is a 335-amino-acid chain: Lipoyl synthase (335 aa).

Residues Cys-55, Cys-60, Cys-66, Cys-81, Cys-85, Cys-88, and Ser-292 each coordinate [4Fe-4S] cluster. In terms of domain architecture, Radical SAM core spans 67 to 281 (WEDREATFLI…SQRAEEIGFQ (215 aa)).

The protein belongs to the radical SAM superfamily. Lipoyl synthase family. [4Fe-4S] cluster serves as cofactor.

It is found in the cytoplasm. It carries out the reaction [[Fe-S] cluster scaffold protein carrying a second [4Fe-4S](2+) cluster] + N(6)-octanoyl-L-lysyl-[protein] + 2 oxidized [2Fe-2S]-[ferredoxin] + 2 S-adenosyl-L-methionine + 4 H(+) = [[Fe-S] cluster scaffold protein] + N(6)-[(R)-dihydrolipoyl]-L-lysyl-[protein] + 4 Fe(3+) + 2 hydrogen sulfide + 2 5'-deoxyadenosine + 2 L-methionine + 2 reduced [2Fe-2S]-[ferredoxin]. It functions in the pathway protein modification; protein lipoylation via endogenous pathway; protein N(6)-(lipoyl)lysine from octanoyl-[acyl-carrier-protein]: step 2/2. Functionally, catalyzes the radical-mediated insertion of two sulfur atoms into the C-6 and C-8 positions of the octanoyl moiety bound to the lipoyl domains of lipoate-dependent enzymes, thereby converting the octanoylated domains into lipoylated derivatives. The protein is Lipoyl synthase of Micrococcus luteus (strain ATCC 4698 / DSM 20030 / JCM 1464 / CCM 169 / CCUG 5858 / IAM 1056 / NBRC 3333 / NCIMB 9278 / NCTC 2665 / VKM Ac-2230) (Micrococcus lysodeikticus).